We begin with the raw amino-acid sequence, 144 residues long: EF-hand calcium-binding domain-containing protein 8 (144 aa).

EF-hand domains follow at residues 52 to 86 (IHLA…VLSS) and 87 to 122 (VSDE…EFQG).

This is EF-hand calcium-binding domain-containing protein 8 (EFCAB8) from Homo sapiens (Human).